The primary structure comprises 622 residues: V-type ATP synthase subunit I 1 (622 aa).

Helical transmembrane passes span 306–326, 328–348, 373–393, 428–448, 459–479, 485–505, 532–552, and 562–582; these read WVNL…YWEV, ISGF…ADAG, PAWC…ALVC, QMHV…LIVV, AEFG…NLIV, PLTG…FIFV, VFAD…GGAI, and PLFA…GHGL.

It belongs to the V-ATPase 116 kDa subunit family.

The protein resides in the cell membrane. Produces ATP from ADP in the presence of a proton gradient across the membrane. In Treponema pallidum (strain Nichols), this protein is V-type ATP synthase subunit I 1 (atpI1).